A 142-amino-acid chain; its full sequence is Hemoglobin anodic subunit alpha (142 aa).

Ser1 is modified (N-acetylserine). In terms of domain architecture, Globin spans 1 to 142 (SLSTKDKAVV…LALALADRYR (142 aa)). His59 serves as a coordination point for O2. His88 provides a ligand contact to heme b.

Belongs to the globin family. As to quaternary structure, heterotetramer of two alpha chains and two beta chains. As to expression, red blood cells.

Involved in oxygen transport from gills to the various peripheral tissues. In Gymnothorax unicolor (Brown moray), this protein is Hemoglobin anodic subunit alpha.